A 1007-amino-acid polypeptide reads, in one-letter code: Aldehyde reductase lnbA (1007 aa).

The segment at 35-428 (QVRQSPSSIA…GRVDHQIKVR (394 aa)) is adenylation (A) domain. Positions 540 to 617 (TLCQDTQTVL…ALASIIDHAK (78 aa)) constitute a Carrier domain. The residue at position 577 (serine 577) is an O-(pantetheine 4'-phosphoryl)serine. The short-chain dehydrogenase/reductase (R) domain stretch occupies residues 659–998 (IFITGATGFV…PTLDCSLLKK (340 aa)).

It belongs to the NRP synthetase family.

It carries out the reaction L-tyrosinal + AMP + diphosphate + NADP(+) = L-tyrosine + ATP + NADPH + H(+). Its pathway is secondary metabolite biosynthesis. Non-canonical nonribosomal peptide synthetase; part of the lnb gene cluster that mediates the biosynthesis of diastereomeric piperazines. Lna and lnb clusters encode sets of enzymes that produce overlapping sets of previously undescribed metabolites such as piperazinomycin-like metabolites or morpholine. The lna and lnb biosynthetic pathways appear to be part of a signaling network that controls the formation of sclerotia, a resilient overwintering structure. One primary function of the non-canonical nonribosomal peptide synthetases lnaA and lnbA consists in the reduction of L-tyrosine. The presence in the clusters of tailoring enzymes such as the oxidoreductases lnaB, lnbB, lnaE or lnbE, as well as of the cytochrome P450 monooxygenases lnaC, lnaD, or lnbC, might explain formation of various diastereomeric piperazines. This Aspergillus flavus (strain ATCC 200026 / FGSC A1120 / IAM 13836 / NRRL 3357 / JCM 12722 / SRRC 167) protein is Aldehyde reductase lnbA.